A 271-amino-acid chain; its full sequence is Proteasome inhibitor PI31 subunit (271 aa).

The residue at position 2 (Ala2) is an N-acetylalanine. Positions 2-150 (AGLEVLFASA…PIHEQWEKAN (149 aa)) are important for homodimerization and interaction with FBXO7. Position 153 is a phosphoserine (Ser153). Arg205 bears the Omega-N-methylarginine mark. Asymmetric dimethylarginine is present on Arg219. The segment at 222–271 (IDPSSGLPNRLPPGAVPPGARFDPFGPIGTSPPGPNPDHLPPPGYDDMYL) is disordered. At Arg231 the chain carries Omega-N-methylarginine. A compositionally biased stretch (pro residues) spans 251–265 (TSPPGPNPDHLPPPG). A Phosphoserine modification is found at Ser252.

Belongs to the proteasome inhibitor PI31 family. In terms of assembly, monomer and homodimer. Interacts with FBXO7. Interacts with the 20S proteasome.

The protein localises to the cytoplasm. Its subcellular location is the endoplasmic reticulum. Plays an important role in control of proteasome function. Inhibits the hydrolysis of protein and peptide substrates by the 20S proteasome. Also inhibits the activation of the proteasome by the proteasome regulatory proteins PA700 and PA28. In Homo sapiens (Human), this protein is Proteasome inhibitor PI31 subunit (PSMF1).